Here is a 354-residue protein sequence, read N- to C-terminus: Probable DNA repair protein RAD51 homolog 4 (354 aa).

115–122 (GNTSCGKT) provides a ligand contact to ATP.

The protein belongs to the RecA family. RAD51 subfamily.

It localises to the nucleus. In terms of biological role, involved in the homologous recombination repair (HRR) pathway of double-stranded DNA breaks arising during DNA replication or induced by DNA-damaging agents. The protein is Probable DNA repair protein RAD51 homolog 4 (rad51d) of Dictyostelium discoideum (Social amoeba).